The chain runs to 174 residues: uncharacterized protein (174 aa).

Residues 153-174 form a disordered region; that stretch reads RSGNHSAGNVHPASPMIKVQGG.

This is an uncharacterized protein from Sinorhizobium fredii (strain NBRC 101917 / NGR234).